Reading from the N-terminus, the 803-residue chain is Sensor histidine kinase CheAY (803 aa).

His-47 carries the phosphohistidine modification. Disordered regions lie at residues 134 to 185 (LESA…DEPD) and 209 to 255 (EADK…ENKA). Basic and acidic residues-rich tracts occupy residues 136-166 (SAKE…ENKA), 209-226 (EADK…KPKQ), and 233-254 (ETPK…EENK). In terms of domain architecture, Histidine kinase spans 270–517 (RLDHLMNLIG…TQKLKIPLTL (248 aa)). The residue at position 273 (His-273) is a Phosphohistidine; by autocatalysis. Residues 519–653 (IIQALLVGVQ…VGAMMDMAKS (135 aa)) form the CheW-like domain. The region spanning 678-796 (IVLAIDDSST…YLTTVVKRSI (119 aa)) is the Response regulatory domain. A 4-aspartylphosphate modification is found at Asp-729.

Post-translationally, autophosphorylated.

The catalysed reaction is ATP + protein L-histidine = ADP + protein N-phospho-L-histidine.. In terms of biological role, member of the two-component regulatory system CheAY/CheY that regulates chemotaxis and colonization of the gastric mucosa. Functions as a sensor protein kinase which is autophosphorylated at a histidine residue and transfers its phosphate group to the conserved aspartic acid residue in the regulatory domain of CheY. In turn, phosphorylated CheY (CheY-P) interacts with the flagellar motor protein FliM to cause clockwise flagellar rotation and bacterial reversals, as opposed to straight swimming when CheY is not phosphorylated. The sequence is that of Sensor histidine kinase CheAY (cheAY) from Helicobacter pylori (strain ATCC 700392 / 26695) (Campylobacter pylori).